Here is a 461-residue protein sequence, read N- to C-terminus: UDP-N-acetylmuramoylalanine--D-glutamate ligase (461 aa).

Residue 115–121 (GSNGKTT) participates in ATP binding.

The protein belongs to the MurCDEF family.

Its subcellular location is the cytoplasm. It catalyses the reaction UDP-N-acetyl-alpha-D-muramoyl-L-alanine + D-glutamate + ATP = UDP-N-acetyl-alpha-D-muramoyl-L-alanyl-D-glutamate + ADP + phosphate + H(+). Its pathway is cell wall biogenesis; peptidoglycan biosynthesis. Its function is as follows. Cell wall formation. Catalyzes the addition of glutamate to the nucleotide precursor UDP-N-acetylmuramoyl-L-alanine (UMA). This is UDP-N-acetylmuramoylalanine--D-glutamate ligase from Acidobacterium capsulatum (strain ATCC 51196 / DSM 11244 / BCRC 80197 / JCM 7670 / NBRC 15755 / NCIMB 13165 / 161).